A 321-amino-acid chain; its full sequence is tRNA uridine(34) hydroxylase (321 aa).

In terms of domain architecture, Rhodanese spans 135–233 (DDPDTLVIDT…YLEQVPEEES (99 aa)). Catalysis depends on C193, which acts as the Cysteine persulfide intermediate. Residues 301 to 321 (RQRQMDQLSSASSKKSDDFSL) form a disordered region.

It belongs to the TrhO family.

It catalyses the reaction uridine(34) in tRNA + AH2 + O2 = 5-hydroxyuridine(34) in tRNA + A + H2O. Catalyzes oxygen-dependent 5-hydroxyuridine (ho5U) modification at position 34 in tRNAs. This chain is tRNA uridine(34) hydroxylase, found in Parasynechococcus marenigrum (strain WH8102).